A 456-amino-acid polypeptide reads, in one-letter code: Phosphatidylinositol N-acetylglucosaminyltransferase gpi3 subunit (456 aa).

It belongs to the glycosyltransferase group 1 family. Glycosyltransferase 4 subfamily. In terms of assembly, component of a Phosphatidylinositol N-acetylglucosaminyltransferase complex.

The catalysed reaction is a 1,2-diacyl-sn-glycero-3-phospho-(1D-myo-inositol) + UDP-N-acetyl-alpha-D-glucosamine = a 6-(N-acetyl-alpha-D-glucosaminyl)-1-(1,2-diacyl-sn-glycero-3-phospho)-1D-myo-inositol + UDP + H(+). It participates in glycolipid biosynthesis; glycosylphosphatidylinositol-anchor biosynthesis. Functionally, catalytic subunit in the complex catalyzing the transfer of N-acetylglucosamine from UDP-N-acetylglucosamine to phosphatidylinositol, the first step of GPI biosynthesis. The protein is Phosphatidylinositol N-acetylglucosaminyltransferase gpi3 subunit (gpi3) of Schizosaccharomyces pombe (strain 972 / ATCC 24843) (Fission yeast).